The following is a 159-amino-acid chain: Ribosomal RNA large subunit methyltransferase H (159 aa).

Residues Leu-76, Gly-108, and 127 to 132 (FGLLTF) contribute to the S-adenosyl-L-methionine site.

It belongs to the RNA methyltransferase RlmH family. In terms of assembly, homodimer.

The protein localises to the cytoplasm. The enzyme catalyses pseudouridine(1915) in 23S rRNA + S-adenosyl-L-methionine = N(3)-methylpseudouridine(1915) in 23S rRNA + S-adenosyl-L-homocysteine + H(+). In terms of biological role, specifically methylates the pseudouridine at position 1915 (m3Psi1915) in 23S rRNA. This is Ribosomal RNA large subunit methyltransferase H from Streptococcus thermophilus (strain ATCC BAA-491 / LMD-9).